We begin with the raw amino-acid sequence, 354 residues long: Type II secretion system protein K (354 aa).

The propeptide at 1–7 is leader sequence; it reads MSRRQRG. A helical membrane pass occupies residues 8-28; that stretch reads VALLIVMLMLSLMVTIAASIT. At 29-354 the chain is on the periplasmic side; it reads ERSGKAWQRT…QYGGYRTVNP (326 aa). Residues 114–151 form a disordered region; it reads NVTPNNASGNNTSGNNNAANGSSGNGNSPQPPKVGTSE. The span at 118 to 141 shows a compositional bias: low complexity; sequence NNASGNNTSGNNNAANGSSGNGNS.

Belongs to the GSP K family. Type II secretion is composed of four main components: the outer membrane complex, the inner membrane complex, the cytoplasmic secretion ATPase and the periplasm-spanning pseudopilus. Interacts with core component OutG. Post-translationally, cleaved by prepilin peptidase.

It localises to the cell inner membrane. Component of the type II secretion system required for the energy-dependent secretion of extracellular factors such as proteases and toxins from the periplasm. Plays a role in pseudopilus assembly and seems to control its length. Interacts with the pseudopilus tip complex that is critical for the recognition and binding of secretion substrates. This is Type II secretion system protein K (outK) from Dickeya chrysanthemi (Pectobacterium chrysanthemi).